We begin with the raw amino-acid sequence, 392 residues long: Acetyl-CoA acetyltransferase (392 aa).

The Acyl-thioester intermediate role is filled by Cys89. Active-site proton acceptor residues include His348 and Cys378.

Belongs to the thiolase-like superfamily. Thiolase family. In terms of assembly, homotetramer.

Its subcellular location is the cytoplasm. The catalysed reaction is 2 acetyl-CoA = acetoacetyl-CoA + CoA. It participates in biopolymer metabolism; poly-(R)-3-hydroxybutanoate biosynthesis. The protein operates within metabolic intermediate biosynthesis; (R)-mevalonate biosynthesis; (R)-mevalonate from acetyl-CoA: step 1/3. This chain is Acetyl-CoA acetyltransferase, found in Shinella zoogloeoides (Crabtreella saccharophila).